A 466-amino-acid chain; its full sequence is Chromosomal replication initiator protein DnaA (466 aa).

The domain I, interacts with DnaA modulators stretch occupies residues 1-86 (MSLSLWQQCL…EVGTKPVTQT (86 aa)). Positions 86 to 129 (TLKTPVHNVVAPTQTTTAQPQRVAPAARSGWDNVPAPAEPTYRS) are domain II. Residues 130-346 (NVNVKHTFDN…GALNRVIANA (217 aa)) are domain III, AAA+ region. 4 residues coordinate ATP: Gly174, Gly176, Lys177, and Thr178. The segment at 347–466 (NFTGRAITID…FSNLIRTLSS (120 aa)) is domain IV, binds dsDNA.

The protein belongs to the DnaA family. Oligomerizes as a right-handed, spiral filament on DNA at oriC.

The protein localises to the cytoplasm. Plays an essential role in the initiation and regulation of chromosomal replication. ATP-DnaA binds to the origin of replication (oriC) to initiate formation of the DNA replication initiation complex once per cell cycle. Binds the DnaA box (a 9 base pair repeat at the origin) and separates the double-stranded (ds)DNA. Forms a right-handed helical filament on oriC DNA; dsDNA binds to the exterior of the filament while single-stranded (ss)DNA is stabiized in the filament's interior. The ATP-DnaA-oriC complex binds and stabilizes one strand of the AT-rich DNA unwinding element (DUE), permitting loading of DNA polymerase. After initiation quickly degrades to an ADP-DnaA complex that is not apt for DNA replication. Binds acidic phospholipids. The polypeptide is Chromosomal replication initiator protein DnaA (Salmonella enteritidis PT4 (strain P125109)).